Here is a 486-residue protein sequence, read N- to C-terminus: N-succinylglutamate 5-semialdehyde dehydrogenase (486 aa).

An NAD(+)-binding site is contributed by 220–225 (GSSRTG). Catalysis depends on residues Glu243 and Cys277.

This sequence belongs to the aldehyde dehydrogenase family. AstD subfamily.

It catalyses the reaction N-succinyl-L-glutamate 5-semialdehyde + NAD(+) + H2O = N-succinyl-L-glutamate + NADH + 2 H(+). It participates in amino-acid degradation; L-arginine degradation via AST pathway; L-glutamate and succinate from L-arginine: step 4/5. Functionally, catalyzes the NAD-dependent reduction of succinylglutamate semialdehyde into succinylglutamate. This chain is N-succinylglutamate 5-semialdehyde dehydrogenase, found in Shewanella piezotolerans (strain WP3 / JCM 13877).